Consider the following 445-residue polypeptide: Glycerophosphocholine choline phosphodiesterase ENPP6 (445 aa).

Residues 1–22 (MAGKLGVLLLALVLSLAQPASA) form the signal peptide. Substrate is bound by residues Asp-32, Ser-71, and Asn-92. The Zn(2+) site is built by Asp-32 and Ser-71. The active-site Nucleophile is Ser-71. Ser-71 carries the phosphoserine modification. 2 N-linked (GlcNAc...) asparagine glycosylation sites follow: Asn-100 and Asn-118. A disulfide bond links Cys-142 and Cys-154. Residue Asp-193 participates in substrate binding. Zn(2+)-binding residues include Asp-193, His-197, Asp-240, and His-241. His-241 contributes to the substrate binding site. The N-linked (GlcNAc...) asparagine glycan is linked to Asn-341. His-356 is a binding site for substrate. His-356 lines the Zn(2+) pocket. N-linked (GlcNAc...) asparagine glycosylation is present at Asn-406. Residue Ser-421 is the site of GPI-anchor amidated serine attachment. A propeptide spans 422–445 (SAPGAPPCACALVTVLLVLLAILA) (removed in mature form).

It belongs to the nucleotide pyrophosphatase/phosphodiesterase family. Homodimer; disulfide-linked. Homotetramer. Zn(2+) serves as cofactor.

It localises to the cell membrane. It catalyses the reaction sn-glycerol 3-phosphocholine + H2O = phosphocholine + glycerol + H(+). It carries out the reaction a 1-acyl-sn-glycero-3-phosphocholine + H2O = a 1-acyl-sn-glycerol + phosphocholine + H(+). The enzyme catalyses a 1-O-alkyl-sn-glycero-3-phosphocholine + H2O = a 1-O-alkyl-sn-glycerol + phosphocholine + H(+). The catalysed reaction is 1-dodecanoyl-sn-glycero-3-phosphocholine + H2O = 1-dodecanoyl-sn-glycerol + phosphocholine + H(+). It catalyses the reaction 1-hexadecanoyl-sn-glycero-3-phosphocholine + H2O = 1-hexadecanoyl-sn-glycerol + phosphocholine + H(+). It carries out the reaction 1-(5Z,8Z,11Z,14Z-eicosatetraenoyl)-sn-glycero-3-phosphocholine + H2O = 1-(5Z,8Z,11Z,14Z-eicosatetraenoyl)-sn-glycerol + phosphocholine + H(+). The enzyme catalyses 1-tetradecanoyl-sn-glycero-3-phosphocholine + H2O = 1-tetradecanoyl-sn-glycerol + phosphocholine + H(+). The catalysed reaction is sphing-4-enine-phosphocholine + H2O = sphing-4-enine + phosphocholine + H(+). It catalyses the reaction 1-(9Z-octadecenoyl)-sn-glycero-3-phosphocholine + H2O = 1-(9Z-octadecenoyl)-sn-glycerol + phosphocholine + H(+). It carries out the reaction 1-(9Z,12Z)-octadecadienoyl-sn-glycero-3-phosphocholine + H2O = 1-(9Z,12Z-octadecadienoyl)-sn-glycerol + phosphocholine + H(+). The enzyme catalyses glycero-2-phosphocholine + H2O = phosphocholine + glycerol + H(+). Inhibited by EDTA and EGTA in vitro. Choline-specific glycerophosphodiesterase that hydrolyzes glycerophosphocholine (GPC) and lysophosphatidylcholine (LPC) and contributes to supplying choline to the cells. Has a preference for LPC with short (12:0 and 14:0) or polyunsaturated (18:2 and 20:4) fatty acids. In vitro, hydrolyzes only choline-containing lysophospholipids, such as sphingosylphosphorylcholine (SPC), platelet-activating factor (PAF) and lysoPAF, but not other lysophospholipids. The sequence is that of Glycerophosphocholine choline phosphodiesterase ENPP6 from Bos taurus (Bovine).